We begin with the raw amino-acid sequence, 380 residues long: MALNLRKTHPLLKIVNDSLIDLPTPSNISAWWNFGSLLGICLITQIITGLLLAMHYTADTSLAFTSVAHMCRNVQFGWLIRHLHANGASFFFICIYLHIGRGFYYGSYLNKETWNIGVILLLTLMATAFVGYVLPWGQMSFWGATVITNLFSAIPYVGQTLVEWLWGGFSVDNPTLTPLFALHFLLPFVIAGLTLVHLTFLHETGSNNPLGIPSDCDKIPFQPYYSIKDLLGFVLMLTPLIAMALFAPNFLGDPENFTPANPLVTPPHIKPEWYFLFAYAILRSIPNKLGGVLALAASVLVLFLIPLLHITKQRSMTFRPLSQMLFWTLVADLLILTWVGSQPVEHPFIIIGQLASLAYFTIILVLFPIVSALENKMLNL.

The next 4 membrane-spanning stretches (helical) occupy residues 34 to 54, 78 to 99, 114 to 134, and 179 to 199; these read FGSL…LLAM, WLIR…YLHI, WNIG…GYVL, and LFAL…VHLT. Residues histidine 84 and histidine 98 each contribute to the heme b site. Residues histidine 183 and histidine 197 each contribute to the heme b site. Residue histidine 202 coordinates a ubiquinone. 4 helical membrane passes run 227 to 247, 289 to 309, 321 to 341, and 348 to 368; these read IKDL…ALFA, LGGV…PLLH, LSQM…WVGS, and FIII…VLFP.

It belongs to the cytochrome b family. As to quaternary structure, the cytochrome bc1 complex contains 11 subunits: 3 respiratory subunits (MT-CYB, CYC1 and UQCRFS1), 2 core proteins (UQCRC1 and UQCRC2) and 6 low-molecular weight proteins (UQCRH/QCR6, UQCRB/QCR7, UQCRQ/QCR8, UQCR10/QCR9, UQCR11/QCR10 and a cleavage product of UQCRFS1). This cytochrome bc1 complex then forms a dimer. Requires heme b as cofactor.

Its subcellular location is the mitochondrion inner membrane. Component of the ubiquinol-cytochrome c reductase complex (complex III or cytochrome b-c1 complex) that is part of the mitochondrial respiratory chain. The b-c1 complex mediates electron transfer from ubiquinol to cytochrome c. Contributes to the generation of a proton gradient across the mitochondrial membrane that is then used for ATP synthesis. This Aphelocoma coerulescens (Florida scrub-jay) protein is Cytochrome b (MT-CYB).